The following is a 508-amino-acid chain: Light-independent protochlorophyllide reductase subunit B (508 aa).

D36 lines the [4Fe-4S] cluster pocket. The active-site Proton donor is the D294. Position 429–430 (429–430) interacts with substrate; it reads GM.

It belongs to the ChlB/BchB/BchZ family. Protochlorophyllide reductase is composed of three subunits; ChlL, ChlN and ChlB. Forms a heterotetramer of two ChlB and two ChlN subunits. The cofactor is [4Fe-4S] cluster.

The enzyme catalyses chlorophyllide a + oxidized 2[4Fe-4S]-[ferredoxin] + 2 ADP + 2 phosphate = protochlorophyllide a + reduced 2[4Fe-4S]-[ferredoxin] + 2 ATP + 2 H2O. It participates in porphyrin-containing compound metabolism; chlorophyll biosynthesis (light-independent). Component of the dark-operative protochlorophyllide reductase (DPOR) that uses Mg-ATP and reduced ferredoxin to reduce ring D of protochlorophyllide (Pchlide) to form chlorophyllide a (Chlide). This reaction is light-independent. The NB-protein (ChlN-ChlB) is the catalytic component of the complex. The chain is Light-independent protochlorophyllide reductase subunit B from Nostoc punctiforme (strain ATCC 29133 / PCC 73102).